We begin with the raw amino-acid sequence, 562 residues long: Phosphoglucomutase-1 (562 aa).

Met1 is subject to N-acetylmethionine. Lys16 is modified (N6-acetyllysine). Position 23 (Arg23) interacts with alpha-D-glucose 1,6-bisphosphate. Thr115 is modified (phosphothreonine). Residue Ser117 participates in alpha-D-glucose 1,6-bisphosphate binding. The active-site Phosphoserine intermediate is the Ser117. Ser117 lines the Mg(2+) pocket. Phosphoserine is present on residues Ser117 and Ser134. Thr185 bears the Phosphothreonine mark. Ser213 carries the post-translational modification Phosphoserine. Residues Asp288, Asp290, and Asp292 each contribute to the Mg(2+) site. Asp292 and Arg293 together coordinate alpha-D-glucose 1,6-bisphosphate. An N6-acetyllysine modification is found at Lys349. A Phosphotyrosine modification is found at Tyr353. Position 357 (Thr357) interacts with alpha-D-glucose 1,6-bisphosphate. Residue Ser369 is modified to Phosphoserine. The alpha-D-glucose 1,6-bisphosphate site is built by Glu376, Ser378, and Lys389. Position 378 is a phosphoserine (Ser378). Residue Lys419 is modified to N6-succinyllysine. Thr467 is modified (phosphothreonine; by PAK1). 3 positions are modified to phosphoserine: Ser477, Ser485, and Ser505. Thr507 carries the post-translational modification Phosphothreonine. 2 positions are modified to phosphoserine: Ser509 and Ser541.

Belongs to the phosphohexose mutase family. Monomer. Mg(2+) is required as a cofactor. Phosphorylation at Thr-467 by PAK1 significantly enhances enzymatic activity.

It localises to the cytoplasm. It carries out the reaction alpha-D-glucose 1-phosphate = alpha-D-glucose 6-phosphate. The enzyme catalyses O-phospho-L-seryl-[protein] + alpha-D-glucose 1-phosphate = alpha-D-glucose 1,6-bisphosphate + L-seryl-[protein]. The catalysed reaction is alpha-D-glucose 1,6-bisphosphate + L-seryl-[protein] = O-phospho-L-seryl-[protein] + alpha-D-glucose 6-phosphate. Functionally, catalyzes the reversible isomerization of alpha-D-glucose 1-phosphate to alpha-D-glucose 6-phosphate. The mechanism proceeds via the intermediate compound alpha-D-glucose 1,6-bisphosphate. This enzyme participates in both the breakdown and synthesis of glucose. The sequence is that of Phosphoglucomutase-1 (PGM1) from Bos taurus (Bovine).